A 298-amino-acid polypeptide reads, in one-letter code: N-acetylmuramic acid 6-phosphate etherase (298 aa).

In terms of domain architecture, SIS spans 55 to 218 (IHAQVSGGGR…STGLMIKSGK (164 aa)). The active-site Proton donor is Glu83. Glu114 is an active-site residue.

Belongs to the GCKR-like family. MurNAc-6-P etherase subfamily. In terms of assembly, homodimer.

The catalysed reaction is N-acetyl-D-muramate 6-phosphate + H2O = N-acetyl-D-glucosamine 6-phosphate + (R)-lactate. The protein operates within amino-sugar metabolism; 1,6-anhydro-N-acetylmuramate degradation. It participates in amino-sugar metabolism; N-acetylmuramate degradation. It functions in the pathway cell wall biogenesis; peptidoglycan recycling. In terms of biological role, specifically catalyzes the cleavage of the D-lactyl ether substituent of MurNAc 6-phosphate, producing GlcNAc 6-phosphate and D-lactate. Together with AnmK, is also required for the utilization of anhydro-N-acetylmuramic acid (anhMurNAc) either imported from the medium or derived from its own cell wall murein, and thus plays a role in cell wall recycling. This is N-acetylmuramic acid 6-phosphate etherase from Escherichia coli O157:H7 (strain EC4115 / EHEC).